The chain runs to 132 residues: Histone H2A.1 (132 aa).

Serine 2 carries the N-acetylserine modification. Residues lysine 5 and lysine 8 each carry the N6-acetyllysine modification. Residues lysine 14 and lysine 22 each carry the N6-succinyllysine modification. Glutamine 106 bears the N5-methylglutamine mark. Position 120 is an N6-malonyllysine; alternate (lysine 120). Lysine 127 is covalently cross-linked (Glycyl lysine isopeptide (Lys-Gly) (interchain with G-Cter in SUMO)). Serine 129 bears the Phosphoserine mark. The short motif at 129-130 is the [ST]-Q motif element; sequence SQ.

The protein belongs to the histone H2A family. In terms of assembly, the nucleosome is a histone octamer containing two molecules each of H2A, H2B, H3 and H4 assembled in one H3-H4 heterotetramer and two H2A-H2B heterodimers. The octamer wraps approximately 147 bp of DNA. Post-translationally, phosphorylated to form H2AS128ph (gamma-H2A) in response to DNA double-strand breaks (DSBs) generated by exogenous genotoxic agents and by stalled replication forks. Phosphorylation is dependent on the DNA damage checkpoint kinases MEC1/ATR and TEL1/ATM, spreads on either side of a detected DSB site and may mark the surrounding chromatin for recruitment of proteins required for DNA damage signaling and repair. Gamma-H2A interacts with ARP4, a shared component of the NuA4 histone acetyltransferase complex and the INO80 and SWR1 chromatin remodeling complexes, and serves to recruit first NuA4, mediating histone H4 acetylation, and subsequently the INO80/SWR1 complexes, facilitating DNA resection, to DSB sites. Gamma-H2A is required for sequestering cohesin around the break site, which is important for efficient post-replicative double-strand break repair by homologous recombination, holding the damaged chromatid close to its undamaged sister template. Gamma-H2A is removed from the DNA prior to the strand invasion-primer extension step of the repair process and subsequently dephosphorylated by PPH3, a component of the histone H2A phosphatase complex (HTP-C). Dephosphorylation is necessary for efficient recovery from the DNA damage checkpoint. N-acetylated by NAT4. In terms of processing, acetylated by ESA1, a component of the NuA4 histone acetyltransferase (HAT) complex, to form H2AK4ac and H2AK7ac. Post-translationally, glutamine methylation at Gln-106 (H2AQ105me) by NOP1 is specifically dedicated to polymerase I. It is present at 35S ribosomal DNA locus and impairs binding of the FACT complex. Sumoylated to from H2AK126su. May lead to transcriptional repression.

It is found in the nucleus. The protein localises to the chromosome. Functionally, core component of nucleosome which plays a central role in DNA double strand break (DSB) repair. Nucleosomes wrap and compact DNA into chromatin, limiting DNA accessibility to the cellular machineries which require DNA as a template. Histones thereby play a central role in transcription regulation, DNA repair, DNA replication and chromosomal stability. DNA accessibility is regulated via a complex set of post-translational modifications of histones, also called histone code, and nucleosome remodeling. This is Histone H2A.1 (HTA1) from Saccharomyces cerevisiae (strain ATCC 204508 / S288c) (Baker's yeast).